Consider the following 88-residue polypeptide: Sec-independent protein translocase protein TatA (88 aa).

Residues 1-21 form a helical membrane-spanning segment; that stretch reads MGGISITQLLIIASIVVVLFG. The segment at 39 to 88 is disordered; sequence FKKSMSEDDNTTSTSSDKSSQDADFTAPPIEPKANLACPDEAKNKDKEHV. Residues 49–62 show a composition bias toward low complexity; the sequence is TTSTSSDKSSQDAD. Over residues 78-88 the composition is skewed to basic and acidic residues; it reads DEAKNKDKEHV.

This sequence belongs to the TatA/E family. As to quaternary structure, the Tat system comprises two distinct complexes: a TatABC complex, containing multiple copies of TatA, TatB and TatC subunits, and a separate TatA complex, containing only TatA subunits. Substrates initially bind to the TatABC complex, which probably triggers association of the separate TatA complex to form the active translocon.

It localises to the cell inner membrane. Functionally, part of the twin-arginine translocation (Tat) system that transports large folded proteins containing a characteristic twin-arginine motif in their signal peptide across membranes. TatA could form the protein-conducting channel of the Tat system. This is Sec-independent protein translocase protein TatA from Sodalis glossinidius (strain morsitans).